Consider the following 1153-residue polypeptide: PPi-type phosphoenolpyruvate carboxykinase 2 (1153 aa).

A coiled-coil region spans residues 1085-1131; the sequence is RQKLEVAKLNKDLAYLNKTIAEKPRLVETLNKQIAAVKEELQYVSSE.

Belongs to the PPi-type phosphoenolpyruvate carboxykinase family. As to quaternary structure, monomer and trimer; forms heterotrimers with PEPCK1 and PEPCK3.

It is found in the cytoplasm. Its subcellular location is the cytosol. The enzyme catalyses oxaloacetate + diphosphate = phosphoenolpyruvate + phosphate + CO2. Functionally, inorganic pyrophosphate (PPi)-dependent phosphoenolpyruvate carboxykinase, which regulates the carbon flow of the central metabolism by fixing CO(2) to phosphoenolpyruvate to produce oxaloacetate. Can also produce pyruvate and diphosphate from phosphoenolpyruvate and phosphate. In Entamoeba histolytica (strain ATCC 30459 / HM-1:IMSS / ABRM), this protein is PPi-type phosphoenolpyruvate carboxykinase 2.